We begin with the raw amino-acid sequence, 186 residues long: Elongation factor P (186 aa).

Belongs to the elongation factor P family.

Its subcellular location is the cytoplasm. It participates in protein biosynthesis; polypeptide chain elongation. Involved in peptide bond synthesis. Stimulates efficient translation and peptide-bond synthesis on native or reconstituted 70S ribosomes in vitro. Probably functions indirectly by altering the affinity of the ribosome for aminoacyl-tRNA, thus increasing their reactivity as acceptors for peptidyl transferase. This chain is Elongation factor P, found in Crocosphaera subtropica (strain ATCC 51142 / BH68) (Cyanothece sp. (strain ATCC 51142)).